We begin with the raw amino-acid sequence, 238 residues long: N-(5'-phosphoribosyl)anthranilate isomerase (238 aa).

The protein belongs to the TrpF family.

It carries out the reaction N-(5-phospho-beta-D-ribosyl)anthranilate = 1-(2-carboxyphenylamino)-1-deoxy-D-ribulose 5-phosphate. It functions in the pathway amino-acid biosynthesis; L-tryptophan biosynthesis; L-tryptophan from chorismate: step 3/5. This is N-(5'-phosphoribosyl)anthranilate isomerase from Methanosarcina acetivorans (strain ATCC 35395 / DSM 2834 / JCM 12185 / C2A).